The sequence spans 394 residues: RNA-binding motif protein, X-linked-like-2 (394 aa).

The 79-residue stretch at 8–86 (GKLFIGGLNL…KAIKVAQATK (79 aa)) folds into the RRM domain. A compositionally biased stretch (basic and acidic residues) spans 67–78 (RDMNGKSLDGKA). Residues 67 to 394 (RDMNGKSLDG…MERGGGRSRY (328 aa)) form a disordered region. A compositionally biased stretch (pro residues) spans 150–165 (RGPPPPPRRAGPPPKR). 2 stretches are compositionally biased toward basic and acidic residues: residues 196–231 (PRREPPPPRRDPYLGPRDEGYSSRDGYSSRDYREPR) and 239–285 (EYTH…REPF). The segment covering 321–333 (YSGGRDSYSSSYG) has biased composition (low complexity). Composition is skewed to basic and acidic residues over residues 334 to 350 (RSDRYSRGRDRVGRPDR) and 383 to 394 (GRMERGGGRSRY).

Its subcellular location is the nucleus. The polypeptide is RNA-binding motif protein, X-linked-like-2 (RBMXL2) (Macaca fascicularis (Crab-eating macaque)).